The sequence spans 348 residues: Mitochondrial glycine transporter (348 aa).

Solcar repeat units follow at residues Thr-10–Asn-94, Leu-130–His-214, and Arg-249–Arg-333. The next 6 membrane-spanning stretches (helical) occupy residues Phe-16 to Gln-41, Gly-69 to Ala-95, Leu-136 to Glu-161, Gly-189 to Lys-212, Ile-253 to Ile-279, and Gly-308 to Val-326.

The protein belongs to the mitochondrial carrier (TC 2.A.29) family. SLC25A38 subfamily.

It is found in the mitochondrion inner membrane. It carries out the reaction glycine(in) = glycine(out). Its function is as follows. Mitochondrial glycine transporter that imports glycine into the mitochondrial matrix. Plays an important role in providing glycine for the first enzymatic step in heme biosynthesis, the condensation of glycine with succinyl-CoA to produce 5-aminolevulinate (ALA) in the mitochondrial matrix. In Neurospora crassa (strain ATCC 24698 / 74-OR23-1A / CBS 708.71 / DSM 1257 / FGSC 987), this protein is Mitochondrial glycine transporter (mic-13).